A 253-amino-acid chain; its full sequence is Acidic endochitinase Q (253 aa).

Residues 1–24 (MEFSGSPMALFCCVFFLFLTGSLA) form the signal peptide. Glutamate 92 acts as the Proton donor in catalysis. A disulfide bond links cysteine 212 and cysteine 244.

It belongs to the glycosyl hydrolase 19 family. Chitinase class I subfamily.

Its subcellular location is the secreted. It carries out the reaction Random endo-hydrolysis of N-acetyl-beta-D-glucosaminide (1-&gt;4)-beta-linkages in chitin and chitodextrins.. Defense against chitin-containing fungal pathogens. This chain is Acidic endochitinase Q, found in Nicotiana tabacum (Common tobacco).